A 224-amino-acid polypeptide reads, in one-letter code: 4'-phosphopantetheinyl transferase (224 aa).

Asp107, Glu109, and Glu151 together coordinate Mg(2+). Positions 158-189 (GKGLSLPLDSFSVRLKDDGHVSIELPDGHEPC) are peptidyl carrier protein binding.

The protein belongs to the P-Pant transferase superfamily. Gsp/Sfp/HetI/AcpT family. Mg(2+) is required as a cofactor.

It carries out the reaction apo-[peptidyl-carrier protein] + CoA = holo-[peptidyl-carrier protein] + adenosine 3',5'-bisphosphate + H(+). May activate the peptidyl carrier protein (PCP) domains of surfactin synthetase SRF1/2/3 and iturin A synthetase, by transferring the 4'-phosphopantetheinyl moiety of coenzyme A (CoA) to a serine residue. Required for the coproduction of the lipopeptide antibiotics, iturin A and surfactin. This chain is 4'-phosphopantetheinyl transferase (lpa-14), found in Bacillus subtilis.